Here is a 528-residue protein sequence, read N- to C-terminus: MLLPLLLLLPMCWAVEVKRPRGVSLTNHHFYDESKPFTCLDGSATIPFDQVNDDYCDCKDGSDEPGTAACPNGSFHCTNTGYKPLYIPSNRVNDGVCDCCDGTDEYNSGVICENTCKEKGRKERESLQQMAEVTREGFRLKKILIEDWKKAREEKQKKLIELQAGKKSLEDQVEMLRTVKEEAEKPEREAKEQHQKLWEEQLAAAKAQQEQELAADAFKELDDDMDGTVSVTELQTHPELDTDGDGALSEAEAQALLSGDTQTDATSFYDRVWAAIRDKYRSEALPTDLPAPSAPDLTEPKEEQPPVPSSPTEEEEEEEEEEEEEAEEEEEEEDSEEAPPPLSPPQPASPAEEDKMPPYDEQTQAFIDAAQEARNKFEEAERSLKDMEESIRNLEQEISFDFGPNGEFAYLYSQCYELTTNEYVYRLCPFKLVSQKPKLGGSPTSLGTWGSWIGPDHDKFSAMKYEQGTGCWQGPNRSTTVRLLCGKETMVTSTTEPSRCEYLMELMTPAACPEPPPEAPTEDDHDEL.

A signal peptide spans 1–14; that stretch reads MLLPLLLLLPMCWA. A Phosphoserine; by FAM20C modification is found at Ser-24. LDL-receptor class A domains lie at 37 to 71 and 72 to 113; these read FTCL…AACP and NGSF…VICE. Intrachain disulfides connect Cys-39-Cys-58 and Cys-56-Cys-70. Asp-49 provides a ligand contact to substrate. Residues Gln-50, Asp-53, Tyr-55, Asp-57, Asp-63, and Glu-64 each coordinate Ca(2+). Asp-53 provides a ligand contact to substrate. Asn-72 carries an N-linked (GlcNAc...) asparagine glycan. 3 disulfides stabilise this stretch: Cys-77–Cys-99, Cys-97–Cys-112, and Cys-100–Cys-116. Phosphoserine; by PKC is present on Ser-89. Residues Arg-91, Asp-94, Val-96, Asp-98, Asp-104, and Glu-105 each coordinate Ca(2+). Lys-166 is modified (N6-succinyllysine). A Phosphoserine; by FAM20C modification is found at Ser-168. EF-hand domains are found at residues 209 to 244 and 245 to 290; these read QEQE…DTDG and DGAL…TDLP. Residues Asp-222, Asp-224, Asp-226, Thr-228, and Glu-233 each coordinate Ca(2+). 2 disordered regions span residues 234–266 and 281–357; these read LQTH…TDAT and RSEA…DKMP. Residues 247 to 258 show a composition bias toward low complexity; that stretch reads ALSEAEAQALLS. The segment covering 312-337 has biased composition (acidic residues); sequence TEEEEEEEEEEEEEAEEEEEEEDSEE. Over residues 338 to 348 the composition is skewed to pro residues; that stretch reads APPPLSPPQPA. Residues Ser-383 and Ser-390 each carry the phosphoserine; by PKC modification. The MRH domain occupies 413–514; that stretch reads SQCYELTTNE…ELMTPAACPE (102 aa). Cys-415 and Cys-428 are oxidised to a cystine. At Ser-434 the chain carries Phosphoserine; by PKC. 2 disulfide bridges follow: Cys-471–Cys-500 and Cys-485–Cys-512. The N-linked (GlcNAc...) asparagine glycan is linked to Asn-476. The Prevents secretion from ER signature appears at 525-528; the sequence is HDEL.

Heterodimer of a catalytic alpha subunit (GANAB) and a beta subunit (PRKCSH). Binds glycosylated PTPRC.

Its subcellular location is the endoplasmic reticulum. The protein operates within glycan metabolism; N-glycan metabolism. Regulatory subunit of glucosidase II that cleaves sequentially the 2 innermost alpha-1,3-linked glucose residues from the Glc(2)Man(9)GlcNAc(2) oligosaccharide precursor of immature glycoproteins. Required for efficient PKD1/Polycystin-1 biogenesis and trafficking to the plasma membrane of the primary cilia. The polypeptide is Glucosidase 2 subunit beta (Homo sapiens (Human)).